We begin with the raw amino-acid sequence, 283 residues long: Trafficking protein particle complex subunit 31 (283 aa).

Residues 1–16 show a composition bias toward polar residues; sequence MSQRIIQPSASDQQFP. Disordered stretches follow at residues 1 to 20 and 126 to 156; these read MSQRIIQPSASDQQFPGKSD and SSKLSNASNSPGMLANSSTATSASANERLQE. The segment covering 126 to 151 has biased composition (low complexity); it reads SSKLSNASNSPGMLANSSTATSASAN.

This sequence belongs to the TRAPP small subunits family. BET3 subfamily. Part of the multisubunit TRAPP (transport protein particle) I complex composed of BET3, BET5, TRS20, TRS23, TRS31 and TRS33. Part of the multisubunit TRAPP (transport protein particle) II complex composed of BET3, BET5, TRS20, TRS23, TRS31, TRS33, TRS65, TRS85, TRS120 and TRS130. Part of the multisubunit TRAPP (transport protein particle) III complex composed of BET3, BET5, TRS20, TRS23, TRS31, TRS33 and TRS85.

It is found in the golgi apparatus. Its subcellular location is the cis-Golgi network. The protein localises to the endoplasmic reticulum. It localises to the preautophagosomal structure. Functionally, component of the TRAPP I, TRAPP II and TRAPP III complexes which act as guanine nucleotide exchange factors (GEF) for YPT1. TRAPP I plays a key role in the late stages of endoplasmic reticulum to Golgi traffic. TRAPP II plays a role in intra-Golgi transport. TRAPP III plays a role in autophagosome formation. The polypeptide is Trafficking protein particle complex subunit 31 (TRS31) (Saccharomyces cerevisiae (strain ATCC 204508 / S288c) (Baker's yeast)).